The sequence spans 574 residues: Proline--tRNA ligase (574 aa).

This sequence belongs to the class-II aminoacyl-tRNA synthetase family. ProS type 1 subfamily. Homodimer.

It is found in the cytoplasm. The catalysed reaction is tRNA(Pro) + L-proline + ATP = L-prolyl-tRNA(Pro) + AMP + diphosphate. Its function is as follows. Catalyzes the attachment of proline to tRNA(Pro) in a two-step reaction: proline is first activated by ATP to form Pro-AMP and then transferred to the acceptor end of tRNA(Pro). As ProRS can inadvertently accommodate and process non-cognate amino acids such as alanine and cysteine, to avoid such errors it has two additional distinct editing activities against alanine. One activity is designated as 'pretransfer' editing and involves the tRNA(Pro)-independent hydrolysis of activated Ala-AMP. The other activity is designated 'posttransfer' editing and involves deacylation of mischarged Ala-tRNA(Pro). The misacylated Cys-tRNA(Pro) is not edited by ProRS. The polypeptide is Proline--tRNA ligase (Nitrosococcus oceani (strain ATCC 19707 / BCRC 17464 / JCM 30415 / NCIMB 11848 / C-107)).